The chain runs to 288 residues: Male determiner protein Nix (288 aa).

3 consecutive RRM domains span residues Tyr-19–Ser-94, Ile-108–Arg-179, and Arg-205–Glu-282.

Functionally, male determiner protein (M-factor) that controls male somatic sexual differentiation. Acts as a dominant factor that regulates the mRNA splicing of doublesex (dsx) or fruitless (fru) transcripts and promotes expression of male splice forms of dsx and fru. The polypeptide is Male determiner protein Nix (Aedes aegypti (Yellowfever mosquito)).